A 232-amino-acid polypeptide reads, in one-letter code: UPF0758 protein EF_2926 (232 aa).

Residues lysine 107–phenylalanine 229 enclose the MPN domain. The Zn(2+) site is built by histidine 178, histidine 180, and aspartate 191. The JAMM motif motif lies at histidine 178–aspartate 191.

The protein belongs to the UPF0758 family.

This is UPF0758 protein EF_2926 from Enterococcus faecalis (strain ATCC 700802 / V583).